Here is a 220-residue protein sequence, read N- to C-terminus: Thiamine-phosphate synthase (220 aa).

Residues 46-50 and asparagine 83 each bind 4-amino-2-methyl-5-(diphosphooxymethyl)pyrimidine; that span reads QFREK. Aspartate 84 and aspartate 103 together coordinate Mg(2+). Serine 122 contributes to the 4-amino-2-methyl-5-(diphosphooxymethyl)pyrimidine binding site. 149–151 provides a ligand contact to 2-[(2R,5Z)-2-carboxy-4-methylthiazol-5(2H)-ylidene]ethyl phosphate; that stretch reads TNS. 4-amino-2-methyl-5-(diphosphooxymethyl)pyrimidine is bound at residue lysine 152. 2-[(2R,5Z)-2-carboxy-4-methylthiazol-5(2H)-ylidene]ethyl phosphate is bound by residues glycine 181 and 201–202; that span reads IS.

This sequence belongs to the thiamine-phosphate synthase family. It depends on Mg(2+) as a cofactor.

It catalyses the reaction 2-[(2R,5Z)-2-carboxy-4-methylthiazol-5(2H)-ylidene]ethyl phosphate + 4-amino-2-methyl-5-(diphosphooxymethyl)pyrimidine + 2 H(+) = thiamine phosphate + CO2 + diphosphate. It carries out the reaction 2-(2-carboxy-4-methylthiazol-5-yl)ethyl phosphate + 4-amino-2-methyl-5-(diphosphooxymethyl)pyrimidine + 2 H(+) = thiamine phosphate + CO2 + diphosphate. The catalysed reaction is 4-methyl-5-(2-phosphooxyethyl)-thiazole + 4-amino-2-methyl-5-(diphosphooxymethyl)pyrimidine + H(+) = thiamine phosphate + diphosphate. It participates in cofactor biosynthesis; thiamine diphosphate biosynthesis; thiamine phosphate from 4-amino-2-methyl-5-diphosphomethylpyrimidine and 4-methyl-5-(2-phosphoethyl)-thiazole: step 1/1. Condenses 4-methyl-5-(beta-hydroxyethyl)thiazole monophosphate (THZ-P) and 2-methyl-4-amino-5-hydroxymethyl pyrimidine pyrophosphate (HMP-PP) to form thiamine monophosphate (TMP). This chain is Thiamine-phosphate synthase, found in Mannheimia succiniciproducens (strain KCTC 0769BP / MBEL55E).